Reading from the N-terminus, the 270-residue chain is NAD kinase (270 aa).

Asp62 serves as the catalytic Proton acceptor. NAD(+) contacts are provided by residues 62–63, Arg67, 129–130, Lys140, Asp159, Ile167, 170–175, Ala194, and Gln227; these read DG, ND, and TSYSFS.

It belongs to the NAD kinase family. A divalent metal cation is required as a cofactor.

It is found in the cytoplasm. The enzyme catalyses NAD(+) + ATP = ADP + NADP(+) + H(+). Involved in the regulation of the intracellular balance of NAD and NADP, and is a key enzyme in the biosynthesis of NADP. Catalyzes specifically the phosphorylation on 2'-hydroxyl of the adenosine moiety of NAD to yield NADP. In Picrophilus torridus (strain ATCC 700027 / DSM 9790 / JCM 10055 / NBRC 100828 / KAW 2/3), this protein is NAD kinase.